We begin with the raw amino-acid sequence, 357 residues long: Probable butyrate kinase 1 (357 aa).

Belongs to the acetokinase family.

It localises to the cytoplasm. The enzyme catalyses butanoate + ATP = butanoyl phosphate + ADP. This Thermotoga maritima (strain ATCC 43589 / DSM 3109 / JCM 10099 / NBRC 100826 / MSB8) protein is Probable butyrate kinase 1.